A 199-amino-acid polypeptide reads, in one-letter code: NAD(P)H dehydrogenase (quinone) (199 aa).

The region spanning 4 to 190 (VLVLYYSTYG…EGARHQGELI (187 aa)) is the Flavodoxin-like domain. Residues 10–15 (STYGHV) and 78–80 (TRF) each bind FMN. Tyr12 contributes to the NAD(+) binding site. Trp98 serves as a coordination point for substrate. FMN is bound by residues 113–119 (STATQHG) and His134.

This sequence belongs to the WrbA family. It depends on FMN as a cofactor.

The catalysed reaction is a quinone + NADH + H(+) = a quinol + NAD(+). It catalyses the reaction a quinone + NADPH + H(+) = a quinol + NADP(+). This is NAD(P)H dehydrogenase (quinone) from Cupriavidus metallidurans (strain ATCC 43123 / DSM 2839 / NBRC 102507 / CH34) (Ralstonia metallidurans).